The following is a 252-amino-acid chain: Probable transcriptional regulatory protein RF_0799 (252 aa).

A disordered region spans residues 1–21; the sequence is MAGHSKFKNIQHRKGAQDKKR.

It belongs to the TACO1 family.

It localises to the cytoplasm. This is Probable transcriptional regulatory protein RF_0799 from Rickettsia felis (strain ATCC VR-1525 / URRWXCal2) (Rickettsia azadi).